Here is a 316-residue protein sequence, read N- to C-terminus: Ribosomal RNA small subunit methyltransferase H (316 aa).

Residues 37–39, aspartate 56, phenylalanine 83, aspartate 106, and histidine 113 contribute to the S-adenosyl-L-methionine site; that span reads GGH. Residues 276-316 are disordered; that stretch reads PILPSEEETKENPASRSAKLRVLRKTKSADKKYKKENSKEE. Over residues 302–316 the composition is skewed to basic and acidic residues; it reads KSADKKYKKENSKEE.

It belongs to the methyltransferase superfamily. RsmH family.

The protein localises to the cytoplasm. The catalysed reaction is cytidine(1402) in 16S rRNA + S-adenosyl-L-methionine = N(4)-methylcytidine(1402) in 16S rRNA + S-adenosyl-L-homocysteine + H(+). In terms of biological role, specifically methylates the N4 position of cytidine in position 1402 (C1402) of 16S rRNA. The polypeptide is Ribosomal RNA small subunit methyltransferase H (Leptospira borgpetersenii serovar Hardjo-bovis (strain JB197)).